The primary structure comprises 1282 residues: MAVPVEEAIAALSTFSLEDEQPEVQGPAVMVSAERAATDSPIEYSDVAAYRLSLSEDTKALNQLNTLIQEGKEMASILYTYRSCVKALPQLPESMKHSQADLYLETYQVLDLEMSRLREIQRWQSSASAKLAADMQRFSRPERRINGPTVTHLWSMLKLLDVLVQLDHLKNAKASIPNDFSWYKRTFTQVSAQWQDTDTMREELDDLQIFLSTRWAILLNLHVEMFRVNNVEDILQVLIVFIVESLELDFALLFPERYILLRVLPVLVVLATPSEKDTEALYKRVKLNRLINIFKNDPVIPAFPDLHLSPAAILKELSVYFQKFSSQTRLLTLPAPHELPPREALEYQRHYLIVNHIGALRAEHDDFTIRFASSMNQLLLLKSNDGAYTEWCREVKGNMYDMVVEGFQLLSRWTARIWEQCAWKFSRPCRDAGETPEASGSYSDYEKVVRFNYTAEERKALVELVGYIKSVGSMLQRCDTLVADALWETIHAEVQDFVQNTLATMLRTTFRKKKDLSRILSDMRTLSADWMANTRPEHEMPSSQHGNDESRGNFFYPRPVAPTAAQVHCLQFLIYEVVSGGNLRRPGGFFGNNGSEIPVNDLKQLETFFYKLSFFLHILDYSASIGILTDLGFLWFREFYLESSRVIQFPIECSLPWMLIDYILEAQNSGLLESVLLPFDIYNDSAQQALVVLRQRFLYDEIEAEVDHGFDIFVSRLSESIFTYYKSWSASELLDPSFLFALDNGEKFSIQPVRFTALFKMTKVKILGRTINLRSLIAQRMNRIFRENLEFLFDRFESQDLCAVVELEKLIDILKHSHELLSQDLSIDPFSLMLNEMQENISLVSFSSRLATQIWSEMQSDFLPNFILCNTTQRFVRSSKVPPTQKPSVPSAKPSFYCGTQDLNAAHQSFARLHSGFFGIPHLFSIVKLLGSRSLPWLIRALLDHISNKITTLEPMISGLQEALPKSIGLLSFDGGVTGCMKLIREQLNWGTKSELKSEVLRGIKEIGSVIYTMGLLDIVLREVDTKRFMQTAPWLGLIPGAEGQIVNAQDGESPLVNLLKSATSAVVSSPGCLNPAAFYTMSKQAEAADLLYKANMNGGSVLEYTLAFTSASLDKYCSKWSAPPKTGFVDITTSKDFYRIYGGLQIGYLEEITAPQSAQHEVLGDSIAWGGCTIIYLLGQQLHFELFDFSYQVLNVSEVETVSASHTHRNPQIHQGWEGLLEGMKKARRLNNHVFSMLKARCPLEDKTACAIKQSGAPLPRVRFENTVSAFETLPQKGTVG.

As to quaternary structure, binds NAP1 and ROP2, but not ROP8. In terms of tissue distribution, expressed in roots, root hairs, hypocotyls, cotyledons, stems, leaves, trichomes and flowers.

Its function is as follows. Involved in regulation of actin and microtubule organization. Part of a WAVE complex that activates the ARP2/3 complex. Interacts with the active form of RHO-family GTPases. The chain is Protein PIR (PIR) from Arabidopsis thaliana (Mouse-ear cress).